Consider the following 436-residue polypeptide: GTPase Der (436 aa).

2 consecutive EngA-type G domains span residues 4 to 167 (PTVA…PVEE) and 175 to 351 (IRFS…ESQN). Residues 10-17 (GRPNVGKS), 57-61 (DTGGI), 119-122 (NKVD), 181-188 (GRPNVGKS), 229-233 (DTAGM), and 294-297 (NKWD) each bind GTP. The KH-like domain maps to 352-436 (KRIPSAVLND…PIHLIARKRK (85 aa)).

This sequence belongs to the TRAFAC class TrmE-Era-EngA-EngB-Septin-like GTPase superfamily. EngA (Der) GTPase family. As to quaternary structure, associates with the 50S ribosomal subunit.

Its function is as follows. GTPase that plays an essential role in the late steps of ribosome biogenesis. The protein is GTPase Der of Streptococcus uberis (strain ATCC BAA-854 / 0140J).